An 893-amino-acid polypeptide reads, in one-letter code: MATCIGEKIEDFRVGNLLGKGSFAGVYRAESIHTGLEVAIKMIDKKAMYKAGMVQRVQNEVKIHCQLKHPSILELYNYFEDNNYVYLVLEMCHNGEMNRYLKNRRKPFSENEARHFMHQIITGMLYLHSHGILHRDLTLSNLLLTRNMNIKIADFGLAAQLKMPHEKHYTLCGTPNYISPEIATRSAHGLESDIWSLGCMFYTLLIGRPPFDTDTVKNTLNKVVLADYEMPTFLSREAKDLIHQLLRRNPADRLSLSSVLDHPFMSRNSSKKSKDLGTVEDSIDSGHATISTAITASSSTSISGSLFDRRRLLIEQPLPNKMTIFPKNKNPSDFSSSGDGISFYTSWGNQEQETSNSGRGRVIQEAEERPHSRYLRRAHSSDRSETSHGQSRVKTYTMERCYSAEMLSKSKRSGVEENERYSPTNNDANIFHFFKEKTSNSSGSFEGPDNNQALSNHLCPGKTPFPFPEQTPQTEMVQQWFGNLQINDPSCEQSKTRGVEPPLVYQKRTLRSITSPLTAYRLKPIRQKTKKAVVSILDSEEVCVELLKDYASQEYVKEVLQISSDGSMITIYYPNDGRGFLLADRPPSPTDNISRYSFDNLPEKYWRKYQYASRFVQLVRSKSPKITYFTRYAKCVLMENSPGADFEVWFYDGAKIHKTEDLIQVIEKTGRSYTLKGESEVNSLKEEVKMYMNHANEGHRICLALESIISEEEKKSGSAPFFPIIVGRRPSSTSSPKALTPPPPVDPNYPMRETPSLNRMIINSAASPKQAPVLNPPVVTNEGLGLMGAASETNSSPRSLKDCLPKSAQLLKSVFVKNVGWATQLTSGAVWVQFNDGSQLVVQAGVSSISYTSPDGQTTRYGENEKLPEYIKQKLQCLSSILLMFSNPTPSFH.

Positions 12–265 (FRVGNLLGKG…LSSVLDHPFM (254 aa)) constitute a Protein kinase domain. Residues 18 to 26 (LGKGSFAGV) and K41 contribute to the ATP site. 2 positions are modified to N6-acetyllysine: K45 and K46. Catalysis depends on D136, which acts as the Proton acceptor. Residues 349 to 358 (NQEQETSNSG) show a composition bias toward polar residues. The tract at residues 349–393 (NQEQETSNSGRGRVIQEAEERPHSRYLRRAHSSDRSETSHGQSRV) is disordered. Positions 362 to 371 (VIQEAEERPH) are enriched in basic and acidic residues. A phosphoserine mark is found at S403 and S588. The 114-residue stretch at 509–622 (TLRSITSPLT…SRFVQLVRSK (114 aa)) folds into the Cryptic POLO box 1 (CPB1) domain. Residues 623 to 736 (SPKITYFTRY…GRRPSSTSSP (114 aa)) enclose the Cryptic POLO box 2 (CPB2) domain. The segment at 730-749 (PSSTSSPKALTPPPPVDPNY) is disordered. The POLO box domain maps to 809–887 (QLLKSVFVKN…LSSILLMFSN (79 aa)).

This sequence belongs to the protein kinase superfamily. Ser/Thr protein kinase family. CDC5/Polo subfamily. As to quaternary structure, homodimer. Interacts with CEP152 (via N-terminus). Interacts with CEP78; this interaction may be important for proper PLK4 localization to the centriole and PLK4-induced overduplication of centrioles. Interacts with CEP131. Interacts simultaneously with TENT5C and CEP192. Interacts with TENT5C; this interaction leads to the TENT5C recruitment in the centrosome. Interacts with CEP85; this interaction may be important in cell migration and centriole assembly. Post-translationally, ubiquitinated; leading to its degradation by the proteasome. Tyrosine-phosphorylated by TEC. In terms of processing, acetylation by KAT2A and KAT2B impairs kinase activity by shifting the kinase to an inactive conformation.

Its subcellular location is the cytoplasm. It localises to the cytoskeleton. It is found in the microtubule organizing center. The protein localises to the centrosome. The protein resides in the centriole. Its subcellular location is the nucleus. It localises to the nucleolus. It is found in the cleavage furrow. The catalysed reaction is L-seryl-[protein] + ATP = O-phospho-L-seryl-[protein] + ADP + H(+). It catalyses the reaction L-threonyl-[protein] + ATP = O-phospho-L-threonyl-[protein] + ADP + H(+). In terms of biological role, serine/threonine-protein kinase that plays a central role in centriole duplication. Able to trigger procentriole formation on the surface of the parental centriole cylinder, leading to the recruitment of centriole biogenesis proteins such as SASS6, CPAP, CCP110, CEP135 and gamma-tubulin. When overexpressed, it is able to induce centrosome amplification through the simultaneous generation of multiple procentrioles adjoining each parental centriole during S phase. Phosphorylates 'Ser-151' of FBXW5 during the G1/S transition, leading to inhibit FBXW5 ability to ubiquitinate SASS6. Its central role in centriole replication suggests a possible role in tumorigenesis, centrosome aberrations being frequently observed in tumors. Also involved in deuterosome-mediated centriole amplification in multiciliated that can generate more than 100 centrioles. Also involved in trophoblast differentiation by phosphorylating HAND1, leading to disrupt the interaction between HAND1 and MDFIC and activate HAND1. Phosphorylates CDC25C and CHEK2. Required for the recruitment of STIL to the centriole and for STIL-mediated centriole amplification. Phosphorylates CEP131 and PCM1 which is essential for proper organization and integrity of centriolar satellites. In Bos taurus (Bovine), this protein is Serine/threonine-protein kinase PLK4.